We begin with the raw amino-acid sequence, 452 residues long: Glycoprotein endo-alpha-1,2-mannosidase-like protein (452 aa).

Topologically, residues 1 to 8 (MARRRRRA) are cytoplasmic. A helical; Signal-anchor for type II membrane protein membrane pass occupies residues 9-29 (CIALFLVLLFAFGTLMGLRTL). The Lumenal portion of the chain corresponds to 30-452 (KAPDGLPALG…FIKEKEQWLM (423 aa)). Residues 40-90 (PGPELAPFERRPEGNPAPARAPAAPAAPPPPPPRTAAPRASLGPAEADPAP) are disordered. The span at 64–74 (PAAPPPPPPRT) shows a compositional bias: pro residues.

It belongs to the glycosyl hydrolase 99 family.

It is found in the golgi apparatus membrane. This is Glycoprotein endo-alpha-1,2-mannosidase-like protein (Maneal) from Mus musculus (Mouse).